The following is a 277-amino-acid chain: Release factor glutamine methyltransferase (277 aa).

S-adenosyl-L-methionine-binding positions include 119–123 (GTGCG), Asp142, Trp170, and Asn184. Residue 184-187 (NPPY) participates in substrate binding.

It belongs to the protein N5-glutamine methyltransferase family. PrmC subfamily.

The catalysed reaction is L-glutaminyl-[peptide chain release factor] + S-adenosyl-L-methionine = N(5)-methyl-L-glutaminyl-[peptide chain release factor] + S-adenosyl-L-homocysteine + H(+). Functionally, methylates the class 1 translation termination release factors RF1/PrfA and RF2/PrfB on the glutamine residue of the universally conserved GGQ motif. In Buchnera aphidicola subsp. Baizongia pistaciae (strain Bp), this protein is Release factor glutamine methyltransferase.